We begin with the raw amino-acid sequence, 199 residues long: Nucleoid occlusion factor SlmA (199 aa).

An HTH tetR-type domain is found at 10–71 (RNRREEILQA…SLIEFIEDSL (62 aa)). The segment at residues 34-53 (TTAKLAANVGVSEAALYRHF) is a DNA-binding region (H-T-H motif). Positions 120–140 (NRLQGRINQLFERIEVQIRQV) form a coiled coil.

The protein belongs to the nucleoid occlusion factor SlmA family. Homodimer. Interacts with FtsZ.

The protein resides in the cytoplasm. It localises to the nucleoid. In terms of biological role, required for nucleoid occlusion (NO) phenomenon, which prevents Z-ring formation and cell division over the nucleoid. Acts as a DNA-associated cell division inhibitor that binds simultaneously chromosomal DNA and FtsZ, and disrupts the assembly of FtsZ polymers. SlmA-DNA-binding sequences (SBS) are dispersed on non-Ter regions of the chromosome, preventing FtsZ polymerization at these regions. The protein is Nucleoid occlusion factor SlmA of Photorhabdus laumondii subsp. laumondii (strain DSM 15139 / CIP 105565 / TT01) (Photorhabdus luminescens subsp. laumondii).